Here is a 67-residue protein sequence, read N- to C-terminus: Metallothionein-B (67 aa).

The protein belongs to the metallothionein superfamily. Type 4 family.

In terms of biological role, metallothioneins have a high content of cysteine residues that bind various heavy metals. The sequence is that of Metallothionein-B from Sphaerechinus granularis (Purple sea urchin).